The chain runs to 450 residues: Folate synthesis bifunctional protein (450 aa).

The interval 1–166 is HPPK; that stretch reads MTTWNFVCLG…TFAELAAIYP (166 aa). In terms of domain architecture, Pterin-binding spans 180 to 441; sequence TQIMGIVNVT…QVEGNRRVLA (262 aa). The interval 182-450 is DHPS; it reads IMGIVNVTDD…AAAAWSGMPV (269 aa). Residue N187 coordinates Mg(2+). (7,8-dihydropterin-6-yl)methyl diphosphate-binding positions include T227, D267, N287, D358, K395, and 429–431; that span reads RVH.

This sequence in the C-terminal section; belongs to the DHPS family. The protein in the N-terminal section; belongs to the HPPK family. Mg(2+) is required as a cofactor.

The enzyme catalyses 6-hydroxymethyl-7,8-dihydropterin + ATP = (7,8-dihydropterin-6-yl)methyl diphosphate + AMP + H(+). The catalysed reaction is (7,8-dihydropterin-6-yl)methyl diphosphate + 4-aminobenzoate = 7,8-dihydropteroate + diphosphate. It functions in the pathway cofactor biosynthesis; tetrahydrofolate biosynthesis; 2-amino-4-hydroxy-6-hydroxymethyl-7,8-dihydropteridine diphosphate from 7,8-dihydroneopterin triphosphate: step 4/4. It participates in cofactor biosynthesis; tetrahydrofolate biosynthesis; 7,8-dihydrofolate from 2-amino-4-hydroxy-6-hydroxymethyl-7,8-dihydropteridine diphosphate and 4-aminobenzoate: step 1/2. This is Folate synthesis bifunctional protein (folKP) from Chlamydia muridarum (strain MoPn / Nigg).